Here is a 122-residue protein sequence, read N- to C-terminus: Spermidine export protein MdtJ (122 aa).

4 helical membrane passes run 1 to 21 (MIYWIFLGLAIATEIIGTLSM), 31 to 51 (TGHIVMYVMITASYVMLSMAV), 54 to 74 (VALGVAYALWEGIGILFITLF), and 81 to 101 (EPISALKVLGLVTLIVGIMLV).

This sequence belongs to the drug/metabolite transporter (DMT) superfamily. Small multidrug resistance (SMR) (TC 2.A.7.1) family. MdtJ subfamily. As to quaternary structure, forms a complex with MdtI.

The protein localises to the cell inner membrane. Catalyzes the excretion of spermidine. The sequence is that of Spermidine export protein MdtJ from Serratia proteamaculans (strain 568).